The primary structure comprises 232 residues: 7-cyano-7-deazaguanine synthase (232 aa).

8 to 18 serves as a coordination point for ATP; it reads FSGGQDSTTCL. Zn(2+) is bound by residues Cys187, Cys196, Cys199, and Cys202.

It belongs to the QueC family. Zn(2+) serves as cofactor.

It catalyses the reaction 7-carboxy-7-deazaguanine + NH4(+) + ATP = 7-cyano-7-deazaguanine + ADP + phosphate + H2O + H(+). Its pathway is purine metabolism; 7-cyano-7-deazaguanine biosynthesis. Functionally, catalyzes the ATP-dependent conversion of 7-carboxy-7-deazaguanine (CDG) to 7-cyano-7-deazaguanine (preQ(0)). In Vibrio campbellii (strain ATCC BAA-1116), this protein is 7-cyano-7-deazaguanine synthase.